Here is an 89-residue protein sequence, read N- to C-terminus: Small ribosomal subunit protein uS17 (89 aa).

This sequence belongs to the universal ribosomal protein uS17 family. As to quaternary structure, part of the 30S ribosomal subunit.

In terms of biological role, one of the primary rRNA binding proteins, it binds specifically to the 5'-end of 16S ribosomal RNA. This is Small ribosomal subunit protein uS17 from Variovorax paradoxus (strain S110).